The chain runs to 956 residues: DNA repair endonuclease UVH1 (956 aa).

A Nuclear localization signal motif is present at residues 256–272 (RRQLDPIWHTLGKRTKQ). Disordered regions lie at residues 343 to 363 (HVKN…SVEA), 516 to 593 (TTDM…RPSG), and 697 to 718 (SSTE…GGRK). The span at 697–711 (SSTEFPASSTQNSLT) shows a compositional bias: polar residues. The region spanning 725-805 (QVIVDMREFM…IPVLLIEFSQ (81 aa)) is the ERCC4 domain.

Belongs to the XPF family. As to quaternary structure, heterodimer with ERCC1/RAD10. As to expression, isoform 1 and isoform 2 are widely expressed, predominantly in flowers, meristems and stems. Isoform 3 is detected at low levels.

It is found in the nucleus. Functionally, seems to be involved in nucleotide excision repair (NER) of damaged DNA (dark repair mechanism). Involved in repair of UV light, and probably oxidative damage. The UVH1/RAD1-ERCC1/RAD10 complex may act as an endonuclease making DNA incision 5' to the lesion site. In vitro, is implicated in double strand breaks (DSBs) repair and is required for homologous recombination in the presence of non-homologous overhangs. May mediate the induction of a DNA-damage sensitive cell-cycle checkpoint during the G2 phase. This chain is DNA repair endonuclease UVH1 (UVH1), found in Arabidopsis thaliana (Mouse-ear cress).